A 251-amino-acid chain; its full sequence is Hydroxyacylglutathione hydrolase (251 aa).

Residues histidine 53, histidine 55, aspartate 57, histidine 58, histidine 110, aspartate 127, and histidine 165 each coordinate Zn(2+).

The protein belongs to the metallo-beta-lactamase superfamily. Glyoxalase II family. As to quaternary structure, monomer. Zn(2+) is required as a cofactor.

It carries out the reaction an S-(2-hydroxyacyl)glutathione + H2O = a 2-hydroxy carboxylate + glutathione + H(+). It participates in secondary metabolite metabolism; methylglyoxal degradation; (R)-lactate from methylglyoxal: step 2/2. In terms of biological role, thiolesterase that catalyzes the hydrolysis of S-D-lactoyl-glutathione to form glutathione and D-lactic acid. This is Hydroxyacylglutathione hydrolase from Erwinia tasmaniensis (strain DSM 17950 / CFBP 7177 / CIP 109463 / NCPPB 4357 / Et1/99).